Reading from the N-terminus, the 855-residue chain is Nuclear valosin-containing protein-like (855 aa).

The interaction with RPL5 stretch occupies residues 1–219 (MKPRPGVFVD…SLLESDKKRK (219 aa)). The short motif at 49–52 (RRKR) is the Nucleolar localization signal element. An N6-acetyllysine modification is found at Lys70. The disordered stretch occupies residues 83–234 (LAKRARQDEE…KGNKRKTENL (152 aa)). A Nuclear localization signal motif is present at residues 85–88 (KRAR). Positions 90-110 (DEEDEYTESYSDDDSNMEDYP) are enriched in acidic residues. Composition is skewed to polar residues over residues 113–123 (QSANPMNSSLL) and 131–157 (SESVSTTPKWGQREATTSTPLLTSKTG). A Phosphoserine modification is found at Ser133. Position 137 is a phosphothreonine (Thr137). An N6-acetyllysine modification is found at Lys155. Phosphoserine is present on Ser190. A Glycyl lysine isopeptide (Lys-Gly) (interchain with G-Cter in SUMO2) cross-link involves residue Lys207. Residues Ser210 and Ser214 each carry the phosphoserine modification. The span at 217–228 (KRKGRAKGKGNK) shows a compositional bias: basic residues. The short motif at 217–231 (KRKGRAKGKGNKRKT) is the Nuclear localization signal element. Residues 266-473 (VGGNDATLKE…LTPGFVGADL (208 aa)) form an interaction with WDR74 region. 304–311 (GPPGCGKT) serves as a coordination point for ATP. Positions 496–523 (QKKKPEIEGLPSEGDQEERLGAEPTSET) are disordered. 621–628 (GPPGCGKT) is an ATP binding site.

It belongs to the AAA ATPase family. Interacts with NCL/nucleolin. Isoform 1 and isoform 2 interact with TERT and isoform 1 exhibits a higher binding affinity for TERT compared to isoform 2. Isoform 1 interacts with MTREX in an ATP-dependent manner; the interaction is required to associate NVL with nuclear RNA exosome. Isoform 1 interacts with RPL5 in an ATP-dependent manner. Interacts with WDR74 (through WDR repeats); the interaction is independent of RNA or pre-60S ribosome particles.

It localises to the nucleus. Its subcellular location is the nucleolus. The protein resides in the nucleoplasm. Participates in the assembly of the telomerase holoenzyme and effecting of telomerase activity via its interaction with TERT. Involved in both early and late stages of the pre-rRNA processing pathways. Spatiotemporally regulates 60S ribosomal subunit biogenesis in the nucleolus. Catalyzes the release of specific assembly factors, such as WDR74, from pre-60S ribosomal particles through the ATPase activity. The sequence is that of Nuclear valosin-containing protein-like from Mus musculus (Mouse).